A 107-amino-acid polypeptide reads, in one-letter code: Latency-related protein 2 (107 aa).

The span at 1–44 shows a compositional bias: pro residues; that stretch reads MAPPLPRTPTPTHPHSHAPPLPRTPTPAHPHSHAPPLPRTPTPT. The tract at residues 1-63 is disordered; sequence MAPPLPRTPT…SIQHRQGKDT (63 aa). Repeat copies occupy residues 2 to 17, 18 to 33, and 34 to 49. The interval 2–49 is 3 X 17 AA tandem repeats; the sequence is APPLPRTPTPTHPHSHAPPLPRTPTPAHPHSHAPPLPRTPTPTHPHSH. Residues 46 to 58 show a composition bias toward basic residues; that stretch reads PHSHAPPRSIQHR.

The sequence is that of Latency-related protein 2 from Homo sapiens (Human).